A 197-amino-acid chain; its full sequence is Protein GrpE (197 aa).

The interval 1-41 is disordered; it reads MSSKEQKTPEGQAPEEIITEQHEEVEAVEPDASAEQVDPRD.

The protein belongs to the GrpE family. Homodimer.

It is found in the cytoplasm. In terms of biological role, participates actively in the response to hyperosmotic and heat shock by preventing the aggregation of stress-denatured proteins, in association with DnaK and GrpE. It is the nucleotide exchange factor for DnaK and may function as a thermosensor. Unfolded proteins bind initially to DnaJ; upon interaction with the DnaJ-bound protein, DnaK hydrolyzes its bound ATP, resulting in the formation of a stable complex. GrpE releases ADP from DnaK; ATP binding to DnaK triggers the release of the substrate protein, thus completing the reaction cycle. Several rounds of ATP-dependent interactions between DnaJ, DnaK and GrpE are required for fully efficient folding. The chain is Protein GrpE from Enterobacter sp. (strain 638).